The primary structure comprises 711 residues: MLNPIVRKFQYGQHTVTLETGMMARQATAAVMVSMDDTAVFVTVVGQKKAKPGQDFFPLTVNYQERTYAAGRIPGSFFRREGRPSEGETLIARLIDRPIRPLFPEGFVNEVQVIATVVSVNPQVNPDIVAMIGASAALSLSGIPFNGPIGAARVGYINDQYVLNPTQDELKESKLDLVVAGTEAAVLMVESEAELLSEDQMLGAVVFGHEQQQVVIQNINELVKEAGKPRWDWQPEPVNEALNARVAALAEARLSDAYRITDKQERYAQVDVIKSETIATLLAEDENLDENELGEILHAIEKNVVRSRVLAGEPRIDGREKDMIRGLDVRTGVLPRTHGSALFTRGETQALVTATLGTARDAQVLDELMGERTDTFLFHYNFPPYSVGETGMVGSPKRREIGHGRLAKRGVLAVMPDMDKFPYTVRVVSEITESNGSSSMASVCGASLALMDAGVPIKAAVAGIAMGLVKEGDNYVVLSDILGDEDHLGDMDFKVAGSRDGISALQMDIKIEGITKEIMQVALNQAKGARLHILGVMEQAINAPRGDISEFAPRIHTIKINPDKIKDVIGKGGSVIRALTEETGTTIEIEDDGTVKIAATDGEKAKHAIRRIEEITAEIEVGRVYTGKVTRIVDFGAFVAIGGGKEGLVHISQIADKRVEKVTDYLQMGQEVPVKVLEVDRQGRIRLSIKEATEQSQPAAAPEAPAAEQGE.

Mg(2+) is bound by residues aspartate 486 and aspartate 492. Positions 553–612 (PRIHTIKINPDKIKDVIGKGGSVIRALTEETGTTIEIEDDGTVKIAATDGEKAKHAIRRI) constitute a KH domain. The S1 motif domain maps to 622 to 690 (GRVYTGKVTR…RQGRIRLSIK (69 aa)). The segment at 689-711 (IKEATEQSQPAAAPEAPAAEQGE) is disordered. Over residues 694-711 (EQSQPAAAPEAPAAEQGE) the composition is skewed to low complexity.

This sequence belongs to the polyribonucleotide nucleotidyltransferase family. As to quaternary structure, component of the RNA degradosome, which is a multiprotein complex involved in RNA processing and mRNA degradation. Requires Mg(2+) as cofactor.

It is found in the cytoplasm. The enzyme catalyses RNA(n+1) + phosphate = RNA(n) + a ribonucleoside 5'-diphosphate. In terms of biological role, involved in mRNA degradation. Catalyzes the phosphorolysis of single-stranded polyribonucleotides processively in the 3'- to 5'-direction. The protein is Polyribonucleotide nucleotidyltransferase of Escherichia coli O8 (strain IAI1).